The sequence spans 314 residues: N-acyl-aromatic-L-amino acid amidohydrolase (carboxylate-forming) B (314 aa).

The Zn(2+) site is built by H19 and E22. Substrate-binding positions include R63 and N70 to R71. H116 lines the Zn(2+) pocket. Substrate is bound by residues E178 and Y289.

The protein belongs to the AspA/AstE family. Aspartoacylase subfamily. In terms of assembly, homotetramer. Requires Zn(2+) as cofactor.

It localises to the apical cell membrane. The protein localises to the cytoplasm. It carries out the reaction an N-acyl-aromatic L-alpha-amino acid + H2O = an aromatic L-alpha-amino acid + a carboxylate. The enzyme catalyses an N-acetyl-L-cysteine-S-conjugate + H2O = an S-substituted L-cysteine + acetate. Functionally, plays an important role in deacetylating mercapturic acids in kidney proximal tubules. This is N-acyl-aromatic-L-amino acid amidohydrolase (carboxylate-forming) B (acy3.2) from Danio rerio (Zebrafish).